The sequence spans 260 residues: Alpha-acetolactate decarboxylase (260 aa).

This sequence belongs to the alpha-acetolactate decarboxylase family.

It catalyses the reaction (2S)-2-acetolactate + H(+) = (R)-acetoin + CO2. Its pathway is polyol metabolism; (R,R)-butane-2,3-diol biosynthesis; (R,R)-butane-2,3-diol from pyruvate: step 2/3. Functionally, converts acetolactate into acetoin. In Methylococcus capsulatus (strain ATCC 33009 / NCIMB 11132 / Bath), this protein is Alpha-acetolactate decarboxylase (budA).